The following is a 176-amino-acid chain: Ribosome maturation factor RimP (176 aa).

Residues 143–176 form a disordered region; that stretch reads LKPQTAKKKGRQEETEDMTLELDAVSRAVPEAEI.

The protein belongs to the RimP family.

It is found in the cytoplasm. In terms of biological role, required for maturation of 30S ribosomal subunits. The polypeptide is Ribosome maturation factor RimP (Chlorobium luteolum (strain DSM 273 / BCRC 81028 / 2530) (Pelodictyon luteolum)).